A 418-amino-acid chain; its full sequence is MWGILLKSSNKSCSRLWKPILTQYYSMTSTATDSPLKYYDIGLNLTDPMFHGIYNGKQYHPADYVKLLERAAQRHVKNALVTGSSIAESQSAIELVSSVKDLSPLKLYHTIGVHPCCVNEFADASQGDKASASIDNPSMDEAYNESLYAKVISNPSFAQGKLKELYDLMNQQAKPHDTSFRSIGEIGLDYDRFHYSSKEMQKVFFEEQLKISCLNDKLSSYPLFLHMRSACDDFVQILERFIAGFTDERDTFQLQKLGASSSSGFYKFHPDRKLVVHSFTGSAIDLQKLLNLSPNIFIGVNGCSLRTEENLAVVKQIPTERLLLETDAPWCEIKRTHASFQYLAKYQEVRDFEYPAFKSVKKNKLADKLNAEELYMVKGRNEPCNMEQVAIVVSEVKDVDLATLIDTTWKTTCKIFGE.

Residues Glu-185, His-226, His-277, and Asp-327 each contribute to the a divalent metal cation site.

The protein belongs to the metallo-dependent hydrolases superfamily. TatD-type hydrolase family. Mg(2+) serves as cofactor.

Its subcellular location is the cytoplasm. In terms of biological role, has both endo- and exonuclease activities. Incises double-stranded DNA without obvious specificity via its endonuclease activity and excises the DNA from the 3'-to 5'-end by its exonuclease activity. May have a role in apoptosis. This is Deoxyribonuclease Tat-D from Saccharomyces cerevisiae (strain ATCC 204508 / S288c) (Baker's yeast).